The sequence spans 226 residues: Regulator of microtubule dynamics protein 1 (226 aa).

The protein belongs to the FAM82/RMD family. As to quaternary structure, interacts with air-2.

Its subcellular location is the cytoplasm. It localises to the cytoskeleton. The protein resides in the spindle pole. Acts in chromosome segregation and organization during mitosis. This chain is Regulator of microtubule dynamics protein 1 (rmd-1), found in Caenorhabditis elegans.